Here is a 270-residue protein sequence, read N- to C-terminus: uncharacterized protein (270 aa).

This is an uncharacterized protein from Archaeoglobus fulgidus (strain ATCC 49558 / DSM 4304 / JCM 9628 / NBRC 100126 / VC-16).